The sequence spans 251 residues: tRNA pseudouridine synthase A 1 (251 aa).

Aspartate 52 acts as the Nucleophile in catalysis. Substrate is bound at residue tyrosine 110.

The protein belongs to the tRNA pseudouridine synthase TruA family. Homodimer.

The catalysed reaction is uridine(38/39/40) in tRNA = pseudouridine(38/39/40) in tRNA. Functionally, formation of pseudouridine at positions 38, 39 and 40 in the anticodon stem and loop of transfer RNAs. This is tRNA pseudouridine synthase A 1 from Desulfotalea psychrophila (strain LSv54 / DSM 12343).